Here is a 198-residue protein sequence, read N- to C-terminus: NAD(P)H dehydrogenase (quinone) (198 aa).

The Flavodoxin-like domain occupies 4–189 (ILVLYYSMYG…SIARYQGEYV (186 aa)). FMN-binding positions include 10 to 15 (SMYGHI) and 78 to 80 (TRF). Tyr-12 is an NAD(+) binding site. A substrate-binding site is contributed by Trp-98. FMN-binding positions include 113 to 118 (STGTGG) and His-133.

Belongs to the WrbA family. FMN is required as a cofactor.

It catalyses the reaction a quinone + NADH + H(+) = a quinol + NAD(+). The catalysed reaction is a quinone + NADPH + H(+) = a quinol + NADP(+). This is NAD(P)H dehydrogenase (quinone) from Salmonella typhi.